The sequence spans 248 residues: Mannose-binding protein C (248 aa).

The first 20 residues, 1–20 (MSLIPSLSLLLMSMVAASYS), serve as a signal peptide directing secretion. In terms of domain architecture, Collagen-like spans 42-99 (GINGFPGKDGRDGTKGEKGEPGQGLRGLQGPPGKLGPPGNPGPSGSPGPKGQKGDPGN). The segment at 43–110 (INGFPGKDGR…PDCDSSLAVS (68 aa)) is disordered. The residue at position 47 (Pro-47) is a 4-hydroxyproline. The span at 49–61 (KDGRDGTKGEKGE) shows a compositional bias: basic and acidic residues. Pro-73, Pro-79, Pro-82, and Pro-88 each carry 4-hydroxyproline. Positions 75 to 87 (KLGPPGNPGPSGS) are enriched in pro residues. Residues 112–130 (RKALQTEMARIKKWLTFSL) adopt a coiled-coil conformation. Residues 134 to 245 (VGNKFFLTNG…CSSSHLAVCE (112 aa)) enclose the C-type lectin domain. Cystine bridges form between Cys-155–Cys-244 and Cys-222–Cys-236.

Oligomeric complex of 3 or more homotrimers. Interacts with MASP1 and MASP2. Interacts with MEP1A and MEP1B and may inhibit their catalytic activity. Hydroxylation on proline residues within the sequence motif, GXPG, is most likely to be 4-hydroxy as this fits the requirement for 4-hydroxylation in vertebrates.

The protein resides in the secreted. In terms of biological role, calcium-dependent lectin involved in innate immune defense. Binds mannose, fucose and N-acetylglucosamine on different microorganisms and activates the lectin complement pathway. Binds to late apoptotic cells, as well as to apoptotic blebs and to necrotic cells, but not to early apoptotic cells, facilitating their uptake by macrophages. The chain is Mannose-binding protein C (MBL2) from Nomascus concolor (Black crested gibbon).